Consider the following 299-residue polypeptide: Cancer/testis antigen family 47 member B1 (299 aa).

The span at 1–10 shows a compositional bias: basic and acidic residues; it reads MSATGDRHPT. Disordered regions lie at residues 1 to 102 and 215 to 299; these read MSAT…EGNE and AREP…SKGT. 2 stretches are compositionally biased toward low complexity: residues 20 to 31 and 46 to 60; these read QEGAQAEAAGAG and VPAA…PVEG. Positions 81 to 101 are enriched in acidic residues; sequence AEEDSDIGPATEEEEEEEEGN. A compositionally biased stretch (basic and acidic residues) spans 215-238; that stretch reads AREPAEEAADEKPPEEAAEEKLTE. Composition is skewed to acidic residues over residues 239–251 and 268–281; these read EATE…EPTS and WDEE…EEEK. Positions 270–298 form a coiled coil; that stretch reads EEAQDAAGEEEKEQEKEKDVENKVKNSKG. The span at 282-293 shows a compositional bias: basic and acidic residues; it reads EQEKEKDVENKV.

The protein belongs to the CT47 family.

This is Cancer/testis antigen family 47 member B1 from Homo sapiens (Human).